A 169-amino-acid polypeptide reads, in one-letter code: MIISIIIFSILSFILGVIVSLVSCFCKVKSNLSLINDIDELLPQMQCAQCGYPGCYAYSQAIVDGNENIYKCIPGGKEVVLKLENLLNKSDHRGNFLESLEDSVTYSIVEIDENNCVGCSKCRLVCPVDAVVGTYNFRHTVLIDSCTGCNLCIPLCPTNCIKKKIMFYE.

The tract at residues 1–23 (MIISIIIFSILSFILGVIVSLVS) is hydrophobic. The 4Fe-4S domain maps to 30–89 (SNLSLINDIDELLPQMQCAQCGYPGCYAYSQAIVDGNENIYKCIPGGKEVVLKLENLLNK). Positions 47, 50, 55, 72, 116, 119, 122, 126, 146, 149, 152, and 156 each coordinate [4Fe-4S] cluster. 4Fe-4S ferredoxin-type domains follow at residues 107 to 136 (SIVE…GTYN) and 137 to 166 (FRHT…KKIM).

This sequence belongs to the 4Fe4S bacterial-type ferredoxin family. RnfB subfamily. As to quaternary structure, the complex is composed of six subunits: RnfA, RnfB, RnfC, RnfD, RnfE and RnfG. [4Fe-4S] cluster serves as cofactor.

The protein resides in the cell inner membrane. Functionally, part of a membrane-bound complex that couples electron transfer with translocation of ions across the membrane. This is Ion-translocating oxidoreductase complex subunit B from Buchnera aphidicola subsp. Baizongia pistaciae (strain Bp).